A 481-amino-acid chain; its full sequence is Probable myosin light chain kinase DDB_G0284661 (481 aa).

Residues 13 to 269 (YNITDIIGEG…VKQSLAHKWI (257 aa)) form the Protein kinase domain. ATP is bound by residues 19-27 (IGEGTFSTV) and Lys-43. The active-site Proton acceptor is the Asp-136. 2 disordered regions span residues 285 to 315 (PLIT…PSLK) and 345 to 427 (SNSH…DDDE). The span at 379-421 (SNNNINNNNDNNDNNNSNSNNSNNNINNFINNNNNNNNNNSNF) shows a compositional bias: low complexity.

Belongs to the protein kinase superfamily. CAMK Ser/Thr protein kinase family. CaMK subfamily.

The enzyme catalyses L-seryl-[myosin light chain] + ATP = O-phospho-L-seryl-[myosin light chain] + ADP + H(+). The catalysed reaction is L-threonyl-[myosin light chain] + ATP = O-phospho-L-threonyl-[myosin light chain] + ADP + H(+). Does not have a calmodulin-binding domain. Functionally, may phosphorylate a specific serine in the N-terminus of a myosin light chain. This is Probable myosin light chain kinase DDB_G0284661 from Dictyostelium discoideum (Social amoeba).